Consider the following 254-residue polypeptide: Ribosomal RNA small subunit methyltransferase G (254 aa).

S-adenosyl-L-methionine is bound by residues Gly84, Phe89, 136–137 (VE), and Arg155. Residues 231–254 (HLYPRAVGIPSKQPLGIQADDNRS) form a disordered region.

It belongs to the methyltransferase superfamily. RNA methyltransferase RsmG family.

Its subcellular location is the cytoplasm. Functionally, specifically methylates the N7 position of a guanine in 16S rRNA. The protein is Ribosomal RNA small subunit methyltransferase G of Synechococcus sp. (strain WH7803).